Here is an 834-residue protein sequence, read N- to C-terminus: Periplasmic nitrate reductase (834 aa).

Residues 1–31 (MSSELTRRNLLKAHAAGIAAATAGIALPAAA) constitute a signal peptide (tat-type signal). Residues 43 to 99 (IKWSKAPCRFCGTGCGVMVGVKEGKVVATHGDMQAEVNRGLNCIKGYFLSKIMYGKD) form the 4Fe-4S Mo/W bis-MGD-type domain. Positions 50, 53, 57, and 85 each coordinate [4Fe-4S] cluster. Residues lysine 87, glutamine 154, asparagine 179, cysteine 183, 216–223 (WGSNMAEM), 247–251 (STFTH), 266–268 (GTD), methionine 377, glutamine 381, asparagine 487, 513–514 (SD), lysine 536, aspartate 563, and 723–732 (TGRVLEHWHS) contribute to the Mo-bis(molybdopterin guanine dinucleotide) site. Residue tryptophan 799 coordinates substrate. Residues asparagine 807 and lysine 824 each coordinate Mo-bis(molybdopterin guanine dinucleotide).

It belongs to the prokaryotic molybdopterin-containing oxidoreductase family. NasA/NapA/NarB subfamily. As to quaternary structure, component of the periplasmic nitrate reductase NapAB complex composed of NapA and NapB. The cofactor is [4Fe-4S] cluster. Requires Mo-bis(molybdopterin guanine dinucleotide) as cofactor. Predicted to be exported by the Tat system. The position of the signal peptide cleavage has not been experimentally proven.

It localises to the periplasm. The catalysed reaction is 2 Fe(II)-[cytochrome] + nitrate + 2 H(+) = 2 Fe(III)-[cytochrome] + nitrite + H2O. In terms of biological role, catalytic subunit of the periplasmic nitrate reductase complex NapAB. Receives electrons from NapB and catalyzes the reduction of nitrate to nitrite. The sequence is that of Periplasmic nitrate reductase from Agrobacterium fabrum (strain C58 / ATCC 33970) (Agrobacterium tumefaciens (strain C58)).